A 186-amino-acid polypeptide reads, in one-letter code: Peptidyl-tRNA hydrolase (186 aa).

Position 14 (Tyr14) interacts with tRNA. The active-site Proton acceptor is His19. Residues Tyr64, Asn66, and Asn112 each contribute to the tRNA site.

This sequence belongs to the PTH family. In terms of assembly, monomer.

The protein localises to the cytoplasm. The catalysed reaction is an N-acyl-L-alpha-aminoacyl-tRNA + H2O = an N-acyl-L-amino acid + a tRNA + H(+). Hydrolyzes ribosome-free peptidyl-tRNAs (with 1 or more amino acids incorporated), which drop off the ribosome during protein synthesis, or as a result of ribosome stalling. Its function is as follows. Catalyzes the release of premature peptidyl moieties from peptidyl-tRNA molecules trapped in stalled 50S ribosomal subunits, and thus maintains levels of free tRNAs and 50S ribosomes. This chain is Peptidyl-tRNA hydrolase, found in Bacillus anthracis.